The primary structure comprises 85 residues: UPF0386 protein Bind_1628 (85 aa).

The protein belongs to the UPF0386 family.

The protein is UPF0386 protein Bind_1628 of Beijerinckia indica subsp. indica (strain ATCC 9039 / DSM 1715 / NCIMB 8712).